A 1193-amino-acid chain; its full sequence is Tubulin monoglutamylase TTLL4 (1193 aa).

Disordered regions lie at residues Met1 to Ser37 and Val468 to Leu535. A compositionally biased stretch (polar residues) spans Pro24–Glu34. Over residues Gln472 to Asp482 the composition is skewed to basic and acidic residues. Residues Glu502–Glu515 are compositionally biased toward acidic residues. A TTL domain is found at Arg599 to Ser942. Ser686 carries the phosphoserine modification. Residues Lys716, Arg722 to Gly723, Gln744 to Leu747, and Lys757 to Asp759 each bind ATP. Residue Arg722 participates in a protein binding. Residue Arg783 participates in L-glutamate binding. Thr804–Asn805 lines the ATP pocket. 3 residues coordinate L-glutamate: Tyr806, Ser807, and Lys828. Asp888, Glu901, and Asn903 together coordinate Mg(2+). Residues Pro913–Ser1027 are c-MTBD region. Lys919 is a binding site for L-glutamate. The span at Ser943 to Ser960 shows a compositional bias: low complexity. 2 disordered regions span residues Ser943 to Gln966 and Met1092 to Ser1193. Composition is skewed to polar residues over residues Met1092–Asn1102 and Ser1131–Lys1153. The span at Ser1168 to Ser1182 shows a compositional bias: low complexity. Residues Val1183–Ser1193 show a composition bias toward polar residues.

Belongs to the tubulin--tyrosine ligase family. Mg(2+) serves as cofactor. Highly expressed in testis. Expressed in brain, heart, kidney, liver, lung, muscle and spleen. In the brain, expressed in ependymal cilia, the cortex and the striatum. Expressed in blastomere.

The protein localises to the cytoplasm. The protein resides in the cell projection. It localises to the cilium. Its subcellular location is the cytoskeleton. It is found in the cilium basal body. The enzyme catalyses L-glutamyl-[protein] + L-glutamate + ATP = gamma-L-glutamyl-L-glutamyl-[protein] + ADP + phosphate + H(+). In terms of biological role, monoglutamylase which modifies both tubulin and non-tubulin proteins, adding a single glutamate on the gamma-carboxyl group of specific glutamate residues of target proteins. Involved in the side-chain initiation step of the polyglutamylation reaction but not in the elongation step. Preferentially modifies beta-tail tubulin over the alpha-tubulin. Monoglutamylates nucleosome assembly proteins NAP1L1 and NAP1L4. Monoglutamylates nucleotidyltransferase CGAS, leading to inhibition of CGAS catalytic activity, thereby preventing antiviral defense function. Involved in KLF4 glutamylation which impedes its ubiquitination, thereby leading to somatic cell reprogramming, pluripotency maintenance and embryogenesis. In Mus musculus (Mouse), this protein is Tubulin monoglutamylase TTLL4.